Consider the following 480-residue polypeptide: UDP-N-acetylmuramoylalanine--D-glutamate ligase (480 aa).

Residue 110–116 coordinates ATP; it reads GTNGKST.

This sequence belongs to the MurCDEF family.

It is found in the cytoplasm. The enzyme catalyses UDP-N-acetyl-alpha-D-muramoyl-L-alanine + D-glutamate + ATP = UDP-N-acetyl-alpha-D-muramoyl-L-alanyl-D-glutamate + ADP + phosphate + H(+). It functions in the pathway cell wall biogenesis; peptidoglycan biosynthesis. Cell wall formation. Catalyzes the addition of glutamate to the nucleotide precursor UDP-N-acetylmuramoyl-L-alanine (UMA). The polypeptide is UDP-N-acetylmuramoylalanine--D-glutamate ligase (Synechococcus sp. (strain JA-2-3B'a(2-13)) (Cyanobacteria bacterium Yellowstone B-Prime)).